Reading from the N-terminus, the 43-residue chain is MFKSRIETGGFQFQVHGDDESAMDDEFIDDDDDQQVVEPVTDN.

Residues methionine 1–asparagine 43 are disordered. The segment covering glutamate 20–glutamine 35 has biased composition (acidic residues).

This is an uncharacterized protein from Dictyostelium discoideum (Social amoeba).